Consider the following 334-residue polypeptide: Fructose-1,6-bisphosphatase class 1 (334 aa).

Residues Glu-90, Asp-113, Leu-115, and Asp-116 each contribute to the Mg(2+) site. Substrate-binding positions include 116 to 119 (DGSS), Asn-209, Tyr-242, and Lys-272. Glu-278 provides a ligand contact to Mg(2+).

It belongs to the FBPase class 1 family. In terms of assembly, homotetramer. Mg(2+) serves as cofactor.

Its subcellular location is the cytoplasm. The catalysed reaction is beta-D-fructose 1,6-bisphosphate + H2O = beta-D-fructose 6-phosphate + phosphate. Its pathway is carbohydrate biosynthesis; gluconeogenesis. The polypeptide is Fructose-1,6-bisphosphatase class 1 (Actinobacillus pleuropneumoniae serotype 7 (strain AP76)).